The chain runs to 259 residues: uncharacterized protein (259 aa).

The disordered stretch occupies residues 171–259; sequence LSKMPVPQSP…SYSTYEDDDF (89 aa). Polar residues predominate over residues 179–201; it reads SPSVPTMPSVNNDQPTQKPNKIT. Residues 202 to 211 are compositionally biased toward basic residues; that stretch reads RNYKPKHQHN. Polar residues predominate over residues 212-236; it reads YKPNYQPNYQPNYGQNCSNSHSNDY.

It localises to the virion. This is an uncharacterized protein from Acanthamoeba polyphaga (Amoeba).